The chain runs to 585 residues: ATP-dependent RNA helicase DBP3 (585 aa).

Residues methionine 1 to threonine 124 are disordered. Residues alanine 26–serine 43 show a composition bias toward low complexity. Composition is skewed to basic residues over residues lysine 52 to lysine 64 and alanine 79 to alanine 93. Residues alanine 94 to threonine 124 are compositionally biased toward low complexity. The short motif at phenylalanine 159–alanine 187 is the Q motif element. The 188-residue stretch at tryptophan 190 to valine 377 folds into the Helicase ATP-binding domain. Alanine 203 to threonine 210 contributes to the ATP binding site. Residues aspartate 322–aspartate 325 carry the DEAD box motif. Positions arginine 406 to proline 554 constitute a Helicase C-terminal domain.

This sequence belongs to the DEAD box helicase family. DDX5/DBP2 subfamily.

It is found in the nucleus. It localises to the nucleolus. It carries out the reaction ATP + H2O = ADP + phosphate + H(+). ATP-dependent RNA helicase required for 60S ribosomal subunit synthesis. Involved in efficient pre-rRNA processing, predominantly at site A3, which is necessary for the normal formation of 25S and 5.8S rRNAs. The polypeptide is ATP-dependent RNA helicase DBP3 (DBP3) (Mycosarcoma maydis (Corn smut fungus)).